We begin with the raw amino-acid sequence, 453 residues long: Pre-mRNA-splicing factor prp46 (453 aa).

The span at 62–71 (EKQAKAAAAG) shows a compositional bias: low complexity. The interval 62–129 (EKQAKAAAAG…PSATRQQRPD (68 aa)) is disordered. WD repeat units lie at residues 142-181 (GHLGWVRSLAVEPNNEWFASGAGDRTIKIWNLATGALRLT), 184-223 (GHISTVRGLAVSPRHPYLFSCGEDKMVKCWDLETNKVIRH), 226-265 (GHLSGVYTLALHPRLDLLVTGGRDGVARVWDMRTRSNIHV), 268-309 (GHKG…GVLT), 311-350 (HKKGVRNLAIHPREFTFASASTGSIKQWKCPEGDFMQNFE), 351-389 (GHNAVINSLAVNEDNVLFSGGDNGSMCFWDWKTGYKFQS), and 400-439 (DAEAGIMSATFDRTGLRLITGEADKTIKVWKPDDEATPES). Positions 432 to 453 (DDEATPESHPVTWAPTLGRQRY) are disordered.

It belongs to the WD repeat PRL1/PRL2 family. As to quaternary structure, associated with the spliceosome.

The protein resides in the cytoplasm. The protein localises to the nucleus. Its function is as follows. Involved in pre-mRNA splicing and required for cell cycle progression at G2/M. The sequence is that of Pre-mRNA-splicing factor prp46 (prp46) from Aspergillus fumigatus (strain ATCC MYA-4609 / CBS 101355 / FGSC A1100 / Af293) (Neosartorya fumigata).